The sequence spans 306 residues: Elongation factor Ts (306 aa).

An involved in Mg(2+) ion dislocation from EF-Tu region spans residues 81–84 (TDFV).

It belongs to the EF-Ts family.

It localises to the cytoplasm. In terms of biological role, associates with the EF-Tu.GDP complex and induces the exchange of GDP to GTP. It remains bound to the aminoacyl-tRNA.EF-Tu.GTP complex up to the GTP hydrolysis stage on the ribosome. This chain is Elongation factor Ts, found in Polaromonas naphthalenivorans (strain CJ2).